The primary structure comprises 396 residues: Lipid-A-disaccharide synthase (396 aa).

It belongs to the LpxB family.

The enzyme catalyses a lipid X + a UDP-2-N,3-O-bis[(3R)-3-hydroxyacyl]-alpha-D-glucosamine = a lipid A disaccharide + UDP + H(+). The protein operates within bacterial outer membrane biogenesis; LPS lipid A biosynthesis. Condensation of UDP-2,3-diacylglucosamine and 2,3-diacylglucosamine-1-phosphate to form lipid A disaccharide, a precursor of lipid A, a phosphorylated glycolipid that anchors the lipopolysaccharide to the outer membrane of the cell. This is Lipid-A-disaccharide synthase from Acinetobacter baylyi (strain ATCC 33305 / BD413 / ADP1).